The primary structure comprises 412 residues: Orcinol synthase (412 aa).

Residues C164, H322, and N355 contribute to the active site.

It belongs to the thiolase-like superfamily. Chalcone/stilbene synthases family. As to quaternary structure, homodimer. As to expression, mainly expressed in young leaves, and barely in mature leaves and twigs.

It carries out the reaction 3 malonyl-CoA + acetyl-CoA + 3 H(+) = orcinol + 4 CO2 + 4 CoA. The enzyme catalyses 3 malonyl-CoA + acetyl-CoA + 2 H(+) = orsellinate + 3 CO2 + 4 CoA. The catalysed reaction is 3 malonyl-CoA + acetyl-CoA + 3 H(+) = tetraacetate lactone + 3 CO2 + 4 CoA. It catalyses the reaction 2 malonyl-CoA + acetyl-CoA + 2 H(+) = triacetate lactone + 2 CO2 + 3 CoA. It carries out the reaction 3 malonyl-CoA + acetyl-CoA + 3 H(+) = 2-acetylphloroglucinol + 3 CO2 + 4 CoA. It functions in the pathway secondary metabolite biosynthesis; terpenoid biosynthesis. Functionally, involved in the biosynthesis of acetate-derived aromatic tetraketides natural products, precursors of daurichromenic acid, an anti-human immunodeficiency viruses (HIV) meroterpenoid consisting of sesquiterpene and orsellinic acid (OSA) moieties. Accepts acetyl-CoA as starter substrate and produces orcinol as the major reaction product, along with four minor products including OSA, tetraacetate lactone, triacetate lactone and 2-acetylphloroglucinol. This Rhododendron dauricum (Azalea daurica) protein is Orcinol synthase.